An 80-amino-acid polypeptide reads, in one-letter code: Bacteriochlorophyll c-binding protein (80 aa).

Histidine 25 is an a bacteriochlorophyll c binding site. The segment at 49-80 is disordered; sequence PGVSRSGSGEGAFSSSPSNGFRPKRIRSRFNR. Residues 54–80 constitute a propeptide that is removed on maturation; that stretch reads SGSGEGAFSSSPSNGFRPKRIRSRFNR. Basic residues predominate over residues 70-80; sequence RPKRIRSRFNR.

The protein belongs to the BChl C/E-binding protein family.

It is found in the chlorosome. The protein resides in the chlorosome envelope. In terms of biological role, component of the photosynthetic apparatus. The light harvesting B740 complex binds bacteriochlorophyll c. The sequence is that of Bacteriochlorophyll c-binding protein (cmsA) from Chloroflexus aurantiacus (strain ATCC 29366 / DSM 635 / J-10-fl).